The chain runs to 308 residues: tRNA dimethylallyltransferase (308 aa).

8 to 15 (GPTGTGKS) is a binding site for ATP. 10 to 15 (TGTGKS) contacts substrate.

Belongs to the IPP transferase family. In terms of assembly, monomer. The cofactor is Mg(2+).

It carries out the reaction adenosine(37) in tRNA + dimethylallyl diphosphate = N(6)-dimethylallyladenosine(37) in tRNA + diphosphate. In terms of biological role, catalyzes the transfer of a dimethylallyl group onto the adenine at position 37 in tRNAs that read codons beginning with uridine, leading to the formation of N6-(dimethylallyl)adenosine (i(6)A). This Mycolicibacterium vanbaalenii (strain DSM 7251 / JCM 13017 / BCRC 16820 / KCTC 9966 / NRRL B-24157 / PYR-1) (Mycobacterium vanbaalenii) protein is tRNA dimethylallyltransferase.